The chain runs to 384 residues: Large ribosomal subunit protein uL3m (384 aa).

Disordered stretches follow at residues 80 to 101 (NQVTQGLPAPTSGPAAALKRRE) and 237 to 262 (QEASHGNSLNHRTIGSVGGSQGSGSR). A compositionally biased stretch (polar residues) spans 240 to 249 (SHGNSLNHRT).

Belongs to the universal ribosomal protein uL3 family. Component of the mitochondrial large ribosomal subunit (mt-LSU). Mature N.crassa 74S mitochondrial ribosomes consist of a small (37S) and a large (54S) subunit. The 37S small subunit contains a 16S ribosomal RNA (16S mt-rRNA) and 32 different proteins. The 54S large subunit contains a 23S rRNA (23S mt-rRNA) and 42 different proteins.

Its subcellular location is the mitochondrion. Functionally, component of the mitochondrial ribosome (mitoribosome), a dedicated translation machinery responsible for the synthesis of mitochondrial genome-encoded proteins, including at least some of the essential transmembrane subunits of the mitochondrial respiratory chain. The mitoribosomes are attached to the mitochondrial inner membrane and translation products are cotranslationally integrated into the membrane. The protein is Large ribosomal subunit protein uL3m (mrpl9) of Neurospora crassa (strain ATCC 24698 / 74-OR23-1A / CBS 708.71 / DSM 1257 / FGSC 987).